A 56-amino-acid polypeptide reads, in one-letter code: MAAKGAREKIRLVSTAETGHFYTTTKNKRNMPEKMEIKKFDPVVRKHVIYKEAKIK.

The protein belongs to the bacterial ribosomal protein bL33 family.

This Histophilus somni (strain 129Pt) (Haemophilus somnus) protein is Large ribosomal subunit protein bL33.